A 246-amino-acid chain; its full sequence is uncharacterized protein (246 aa).

Disordered regions lie at residues 9–125 (CSRV…GAMA) and 155–203 (QPVR…EEKA). Residues 27–37 (GTRRQRQRPRQ) show a composition bias toward basic residues. Pro residues-rich tracts occupy residues 54–64 (PRPPTGPPARY) and 101–117 (EPRP…PPGS). Positions 161-176 (KLPKGKGRLRRPRQSR) are enriched in basic residues. Residue threonine 179 is modified to Phosphothreonine. Phosphoserine occurs at positions 196, 210, and 220.

Its subcellular location is the cytoplasm. This is an uncharacterized protein from Mus musculus (Mouse).